Here is a 351-residue protein sequence, read N- to C-terminus: UDP-3-O-acylglucosamine N-acyltransferase (351 aa).

Histidine 240 functions as the Proton acceptor in the catalytic mechanism.

Belongs to the transferase hexapeptide repeat family. LpxD subfamily. Homotrimer.

The enzyme catalyses a UDP-3-O-[(3R)-3-hydroxyacyl]-alpha-D-glucosamine + a (3R)-hydroxyacyl-[ACP] = a UDP-2-N,3-O-bis[(3R)-3-hydroxyacyl]-alpha-D-glucosamine + holo-[ACP] + H(+). The protein operates within bacterial outer membrane biogenesis; LPS lipid A biosynthesis. Catalyzes the N-acylation of UDP-3-O-acylglucosamine using 3-hydroxyacyl-ACP as the acyl donor. Is involved in the biosynthesis of lipid A, a phosphorylated glycolipid that anchors the lipopolysaccharide to the outer membrane of the cell. The chain is UDP-3-O-acylglucosamine N-acyltransferase from Pseudomonas syringae pv. syringae (strain B728a).